Here is a 441-residue protein sequence, read N- to C-terminus: tRNA modification GTPase MnmE (441 aa).

Residues R21, E79, and K118 each coordinate (6S)-5-formyl-5,6,7,8-tetrahydrofolate. Residues 214–370 form the TrmE-type G domain; it reads GFKIAIVGKP…LEGYLKTQDT (157 aa). GTP contacts are provided by residues 224–229, 243–249, and 268–271; these read NVGKSS, SDEAGTT, and DTAG. Mg(2+) contacts are provided by S228 and T249. K441 is a binding site for (6S)-5-formyl-5,6,7,8-tetrahydrofolate.

It belongs to the TRAFAC class TrmE-Era-EngA-EngB-Septin-like GTPase superfamily. TrmE GTPase family. As to quaternary structure, homodimer. Heterotetramer of two MnmE and two MnmG subunits. The cofactor is K(+).

It localises to the cytoplasm. Exhibits a very high intrinsic GTPase hydrolysis rate. Involved in the addition of a carboxymethylaminomethyl (cmnm) group at the wobble position (U34) of certain tRNAs, forming tRNA-cmnm(5)s(2)U34. This Campylobacter concisus (strain 13826) protein is tRNA modification GTPase MnmE.